The following is a 504-amino-acid chain: Maturase K (504 aa).

Belongs to the intron maturase 2 family. MatK subfamily.

The protein localises to the plastid. The protein resides in the chloroplast. Usually encoded in the trnK tRNA gene intron. Probably assists in splicing its own and other chloroplast group II introns. The chain is Maturase K from Actinidia deliciosa (Kiwi).